A 756-amino-acid chain; its full sequence is Sodium/hydrogen exchanger 8 (756 aa).

The Extracellular portion of the chain corresponds to 1–31; it reads MTSIIGAALPYKSPEKAIASSSYSAENDSSP. The N-linked (GlcNAc...) asparagine glycan is linked to asparagine 27. The chain crosses the membrane as a helical span at residues 32–52; that stretch reads VDAVIFAGTSLVLGTACRYLF. The Cytoplasmic portion of the chain corresponds to 53 to 56; sequence NGTR. The chain crosses the membrane as a helical span at residues 57–77; the sequence is VPYTVVLLVIGIFLGSLEYGT. Residues 78 to 89 lie on the Extracellular side of the membrane; it reads KHNLGKLGHGIR. A helical transmembrane segment spans residues 90-110; the sequence is IWNGINPDLLLAVFLPVLLFE. At 111-125 the chain is on the cytoplasmic side; that stretch reads SSFSMDVHQIKRCMG. Residues 126-146 form a helical membrane-spanning segment; sequence QMVLLAGPGVLISTFCLGALI. The Extracellular segment spans residues 147-157; the sequence is KLTFPYNWDWK. Residues 158–178 traverse the membrane as a helical segment; that stretch reads TSLLLGGLLGATDPVAVVALL. Residues 179 to 194 are Cytoplasmic-facing; that stretch reads KELGASKKMTTLIDGE. Residues 195–215 traverse the membrane as a helical segment; sequence SLMNDGVSVVVFQLFFKMVMG. Over 216–225 the chain is Extracellular; that stretch reads HNSDWGSIIK. A helical transmembrane segment spans residues 226–248; that stretch reads FLVQNSFGAVGIGLAFGIASVFW. Residues 249–251 are Cytoplasmic-facing; sequence LKF. A helical membrane pass occupies residues 252-271; that stretch reads IFNDTVAQITVTLSASYFAY. The Extracellular segment spans residues 272 to 276; the sequence is YTAQE. The helical transmembrane segment at 277 to 297 threads the bilayer; the sequence is WAGVSGILTVMILGMFFAAFA. The Cytoplasmic segment spans residues 298–311; the sequence is RTAFKGDSHQSLHH. The chain crosses the membrane as a helical span at residues 312 to 332; that stretch reads FWEMAAYIANTLVFMLSGVII. Residues 333-350 lie on the Extracellular side of the membrane; the sequence is AESVLSGQTISYKGNSWS. Residues 351 to 371 traverse the membrane as a helical segment; sequence FLFLLYLYVQLSRCVVVGVLY. The Cytoplasmic portion of the chain corresponds to 372-385; the sequence is PLLCRSGYGLDWKE. Residues 386–406 form a helical membrane-spanning segment; that stretch reads SIILTWSGLRGAVSLSLALSV. Topologically, residues 407-422 are extracellular; the sequence is KQSSGNSYLSSDTGTR. The chain crosses the membrane as a helical span at residues 423-443; sequence FLFLTGGIVFLTLVVNGSTTQ. Residues 444 to 756 are Cytoplasmic-facing; it reads LLLHLLRMDT…RSLAIGETDA (313 aa).

Belongs to the monovalent cation:proton antiporter 1 (CPA1) transporter (TC 2.A.36) family.

The protein resides in the cell membrane. It carries out the reaction Na(+)(in) + H(+)(out) = Na(+)(out) + H(+)(in). The catalysed reaction is K(+)(in) + H(+)(out) = K(+)(out) + H(+)(in). In terms of biological role, may act in low affinity electroneutral exchange of protons for cations such as Na(+) or K(+) across membranes. May also exchange Li(+) and Cs(+) with a lower affinity. The sequence is that of Sodium/hydrogen exchanger 8 (NHX8) from Arabidopsis thaliana (Mouse-ear cress).